Consider the following 46-residue polypeptide: Delta-actitoxin-Avd1d (46 aa).

3 disulfide bridges follow: Cys4–Cys44, Cys6–Cys34, and Cys27–Cys45.

This sequence belongs to the sea anemone sodium channel inhibitory toxin family. Type I subfamily.

Its subcellular location is the secreted. It is found in the nematocyst. Its function is as follows. Binds specifically to voltage-gated sodium channels (Nav), thereby delaying their inactivation during signal transduction. Thus it strongly stimulates mammalian cardiac muscle contraction. This is Delta-actitoxin-Avd1d from Anemonia sulcata (Mediterranean snakelocks sea anemone).